Here is a 102-residue protein sequence, read N- to C-terminus: NADH-quinone oxidoreductase subunit K (102 aa).

3 helical membrane passes run 5–25, 30–50, and 63–83; these read ALTG…FGVL, ILFQ…AFIA, and MFVL…ALFL.

Belongs to the complex I subunit 4L family. In terms of assembly, NDH-1 is composed of 14 different subunits. Subunits NuoA, H, J, K, L, M, N constitute the membrane sector of the complex.

The protein resides in the cell inner membrane. The enzyme catalyses a quinone + NADH + 5 H(+)(in) = a quinol + NAD(+) + 4 H(+)(out). In terms of biological role, NDH-1 shuttles electrons from NADH, via FMN and iron-sulfur (Fe-S) centers, to quinones in the respiratory chain. The immediate electron acceptor for the enzyme in this species is believed to be ubiquinone. Couples the redox reaction to proton translocation (for every two electrons transferred, four hydrogen ions are translocated across the cytoplasmic membrane), and thus conserves the redox energy in a proton gradient. The sequence is that of NADH-quinone oxidoreductase subunit K from Rhodopseudomonas palustris (strain BisB18).